A 310-amino-acid chain; its full sequence is p-hydroxybenzoic acid efflux pump subunit AaeA (310 aa).

A helical membrane pass occupies residues 12–32 (AITVVLVILAFIAIFNAWVYY).

It belongs to the membrane fusion protein (MFP) (TC 8.A.1) family.

It localises to the cell inner membrane. Forms an efflux pump with AaeB. The sequence is that of p-hydroxybenzoic acid efflux pump subunit AaeA from Shigella flexneri.